A 198-amino-acid polypeptide reads, in one-letter code: Peptidyl-tRNA hydrolase (198 aa).

Tyr-16 is a tRNA binding site. The Proton acceptor role is filled by His-21. TRNA contacts are provided by Phe-67, Asn-69, and Asn-115.

This sequence belongs to the PTH family. Monomer.

The protein resides in the cytoplasm. It catalyses the reaction an N-acyl-L-alpha-aminoacyl-tRNA + H2O = an N-acyl-L-amino acid + a tRNA + H(+). In terms of biological role, hydrolyzes ribosome-free peptidyl-tRNAs (with 1 or more amino acids incorporated), which drop off the ribosome during protein synthesis, or as a result of ribosome stalling. Functionally, catalyzes the release of premature peptidyl moieties from peptidyl-tRNA molecules trapped in stalled 50S ribosomal subunits, and thus maintains levels of free tRNAs and 50S ribosomes. This Prochlorococcus marinus (strain MIT 9301) protein is Peptidyl-tRNA hydrolase.